The sequence spans 276 residues: NH(3)-dependent NAD(+) synthetase (276 aa).

Residue 43-50 coordinates ATP; the sequence is GISGGVDS. A Mg(2+)-binding site is contributed by D49. A deamido-NAD(+)-binding site is contributed by R146. ATP is bound at residue T166. E171 provides a ligand contact to Mg(2+). Deamido-NAD(+) is bound by residues K179 and D186. Residues K195 and T217 each contribute to the ATP site. 266 to 267 serves as a coordination point for deamido-NAD(+); the sequence is HK.

The protein belongs to the NAD synthetase family. Homodimer.

It catalyses the reaction deamido-NAD(+) + NH4(+) + ATP = AMP + diphosphate + NAD(+) + H(+). Its pathway is cofactor biosynthesis; NAD(+) biosynthesis; NAD(+) from deamido-NAD(+) (ammonia route): step 1/1. Functionally, catalyzes the ATP-dependent amidation of deamido-NAD to form NAD. Uses ammonia as a nitrogen source. This chain is NH(3)-dependent NAD(+) synthetase, found in Aliivibrio fischeri (strain MJ11) (Vibrio fischeri).